The primary structure comprises 305 residues: Probable GTP 3',8-cyclase (305 aa).

Residues 6–228 (NHRRPLVSLR…MTRKFMQDRK (223 aa)) form the Radical SAM core domain. Arg-15 is a GTP binding site. Positions 22 and 26 each coordinate [4Fe-4S] cluster. Tyr-28 is an S-adenosyl-L-methionine binding site. Cys-29 is a [4Fe-4S] cluster binding site. GTP is bound at residue Arg-62. Gly-66 provides a ligand contact to S-adenosyl-L-methionine. Thr-92 contributes to the GTP binding site. Ser-116 lines the S-adenosyl-L-methionine pocket. A GTP-binding site is contributed by Lys-153. [4Fe-4S] cluster is bound by residues Cys-249 and Cys-252. 254 to 256 (RLR) serves as a coordination point for GTP. Cys-266 lines the [4Fe-4S] cluster pocket.

It belongs to the radical SAM superfamily. MoaA family. The cofactor is [4Fe-4S] cluster.

The enzyme catalyses GTP + AH2 + S-adenosyl-L-methionine = (8S)-3',8-cyclo-7,8-dihydroguanosine 5'-triphosphate + 5'-deoxyadenosine + L-methionine + A + H(+). The protein operates within cofactor biosynthesis; molybdopterin biosynthesis. Its function is as follows. Catalyzes the cyclization of GTP to (8S)-3',8-cyclo-7,8-dihydroguanosine 5'-triphosphate. The protein is Probable GTP 3',8-cyclase of Methanothermobacter marburgensis (strain ATCC BAA-927 / DSM 2133 / JCM 14651 / NBRC 100331 / OCM 82 / Marburg) (Methanobacterium thermoautotrophicum).